We begin with the raw amino-acid sequence, 430 residues long: Glutamate-1-semialdehyde 2,1-aminomutase (430 aa).

At Lys-267 the chain carries N6-(pyridoxal phosphate)lysine.

The protein belongs to the class-III pyridoxal-phosphate-dependent aminotransferase family. HemL subfamily. In terms of assembly, homodimer. The cofactor is pyridoxal 5'-phosphate.

Its subcellular location is the cytoplasm. The enzyme catalyses (S)-4-amino-5-oxopentanoate = 5-aminolevulinate. Its pathway is porphyrin-containing compound metabolism; protoporphyrin-IX biosynthesis; 5-aminolevulinate from L-glutamyl-tRNA(Glu): step 2/2. The chain is Glutamate-1-semialdehyde 2,1-aminomutase from Thermomicrobium roseum (strain ATCC 27502 / DSM 5159 / P-2).